The sequence spans 641 residues: Tegument protein UL35 (641 aa).

Disordered stretches follow at residues 353–373, 500–572, and 587–641; these read ERGE…PREA, ASSS…PRQR, and AYSH…LRHL. The span at 358–367 shows a compositional bias: acidic residues; that stretch reads GDEDEEQEND. The segment covering 500–563 has biased composition (low complexity); the sequence is ASSSSASSSS…LSGSHGISSA (64 aa). The segment covering 589-599 has biased composition (basic residues); sequence SHHRRHRRRRS. A compositionally biased stretch (basic and acidic residues) spans 632–641; that stretch reads DDLAENLRHL.

Belongs to the herpesviridae pp85 family. In terms of assembly, interacts with UL82. Interacts with isoform UL35A. Interacts with host UBP7; this interaction significantly inhibits the ability of USP7 to form nuclear bodies. Interacts with host DCAF1 (via C-terminus). Interacts with host SNX5; this interaction allows proper gB localization during viral assembly. Interacts with host TBK1; this interaction prevents type I interferon production. As to quaternary structure, interacts with UL82. Interacts with isoform UL35. Interacts with host UBP7; this interaction significantly inhibits the ability of USP7 to form nuclear bodies. Interacts with host SNX5; this interaction allows proper gB localization during viral assembly.

Its subcellular location is the virion tegument. It localises to the host nucleus. The protein localises to the host cytoplasm. Its function is as follows. Plays important role in immediate-early gene expression through interaction with UL82. Forms nuclear bodies in host nucleus, independently of PML. In turn, UL35 nuclear bodies associate with and remodel PML bodies. Through interaction with host DCAF1, causes cells to accumulate in the G2 phase of the cell cycle by inducing a DNA damage response. Regulates viral assembly by controlling the localization of the essential gB through regulation of a retrograde transport pathway. This modulation occurs via binding and inhibition of host sorting nexin 5/SNX5. Also plays a role in the inhibition of pattern recognition receptor-mediated type I interferon signaling at the level of TBK1. Promotes cytoplasmic UL82 accumulation and inhibits UL35-containing nuclear bodies formation. Regulates viral assembly by controlling the localization of the essential gB through regulation of a retrograde transport pathway. This modulation occurs via binding and inhibition of host sorting nexin 5/SNX5. This chain is Tegument protein UL35 (UL35), found in Homo sapiens (Human).